The following is a 351-amino-acid chain: Photosystem II D2 protein (351 aa).

Residues 39-59 (CAYLALGGWLTGTTFVTSWYT) form a helical membrane-spanning segment. Residue His-116 participates in chlorophyll a binding. The helical transmembrane segment at 123–139 (GFMLRQFEIARLVGIRP) threads the bilayer. The pheophytin a site is built by Gln-128 and Asn-141. Residues 151–164 (VFVSVFLMYPLGQS) form a helical membrane-spanning segment. His-196 is a chlorophyll a binding site. Residues 206 to 226 (GALLCAIHGATVENTLFEDGE) form a helical membrane-spanning segment. Positions 213 and 260 each coordinate a plastoquinone. A Fe cation-binding site is contributed by His-213. His-267 contacts Fe cation. Residues 277-293 (GLWMSAIGIVGLALNLR) traverse the membrane as a helical segment.

The protein belongs to the reaction center PufL/M/PsbA/D family. In terms of assembly, PSII is composed of 1 copy each of membrane proteins PsbA, PsbB, PsbC, PsbD, PsbE, PsbF, PsbH, PsbI, PsbJ, PsbK, PsbL, PsbM, PsbT, PsbX, PsbY, PsbZ, Psb30/Ycf12, peripheral proteins PsbO, CyanoQ (PsbQ), PsbU, PsbV and a large number of cofactors. It forms dimeric complexes. The D1/D2 heterodimer binds P680, chlorophylls that are the primary electron donor of PSII, and subsequent electron acceptors. It shares a non-heme iron and each subunit binds pheophytin, quinone, additional chlorophylls, carotenoids and lipids. There is also a Cl(-1) ion associated with D1 and D2, which is required for oxygen evolution. The PSII complex binds additional chlorophylls, carotenoids and specific lipids. serves as cofactor.

The protein resides in the cellular thylakoid membrane. It catalyses the reaction 2 a plastoquinone + 4 hnu + 2 H2O = 2 a plastoquinol + O2. Photosystem II (PSII) is a light-driven water:plastoquinone oxidoreductase that uses light energy to abstract electrons from H(2)O, generating O(2) and a proton gradient subsequently used for ATP formation. It consists of a core antenna complex that captures photons, and an electron transfer chain that converts photonic excitation into a charge separation. The D1/D2 (PsbA/PsbD) reaction center heterodimer binds P680, the primary electron donor of PSII as well as several subsequent electron acceptors. D2 is needed for assembly of a stable PSII complex. This is Photosystem II D2 protein from Crocosphaera subtropica (strain ATCC 51142 / BH68) (Cyanothece sp. (strain ATCC 51142)).